The sequence spans 85 residues: U4-theraphotoxin-Hhn1a (85 aa).

The first 22 residues, 1-22, serve as a signal peptide directing secretion; the sequence is MKVTLIAILTCATVLVLHTTAA. The propeptide occupies 23–48; the sequence is EELEAESQLMEVGMPDTELAAVDEER. Disulfide bonds link cysteine 52/cysteine 66, cysteine 56/cysteine 77, and cysteine 71/cysteine 82.

It belongs to the neurotoxin 12 (Hwtx-2) family. 02 (Hwtx-2) subfamily. As to quaternary structure, monomer. In terms of tissue distribution, expressed by the venom gland.

It is found in the secreted. Functionally, neurotoxin active on both insects and mammals. This chain is U4-theraphotoxin-Hhn1a, found in Cyriopagopus hainanus (Chinese bird spider).